The sequence spans 616 residues: Polypeptide N-acetylgalactosaminyltransferase 3 (616 aa).

The chain crosses the membrane as a helical; Signal-anchor for type II membrane protein span at residues Phe13–Phe33. Residues Leu182–Arg291 form a catalytic subdomain A region. 3 residues coordinate Mn(2+): Asp275, His277, and His413. The tract at residues Pro354–Arg416 is catalytic subdomain B. The N-linked (GlcNAc...) asparagine glycan is linked to Asn482. Residues Asn512–Asp616 form the Ricin B-type lectin domain. Cys515 and Cys533 are disulfide-bonded. UDP-N-acetyl-alpha-D-galactosamine contacts are provided by Asp517, Glu520, His534, and Asn539. A disulfide bridge links Cys588 with Cys601.

It belongs to the glycosyltransferase 2 family. GalNAc-T subfamily. The cofactor is Mn(2+).

The protein localises to the golgi apparatus. It localises to the golgi stack membrane. It carries out the reaction L-seryl-[protein] + UDP-N-acetyl-alpha-D-galactosamine = a 3-O-[N-acetyl-alpha-D-galactosaminyl]-L-seryl-[protein] + UDP + H(+). The enzyme catalyses L-threonyl-[protein] + UDP-N-acetyl-alpha-D-galactosamine = a 3-O-[N-acetyl-alpha-D-galactosaminyl]-L-threonyl-[protein] + UDP + H(+). It functions in the pathway protein modification; protein glycosylation. Its function is as follows. Catalyzes the initial reaction in O-linked oligosaccharide biosynthesis, the transfer of an N-acetyl-D-galactosamine residue to a serine or threonine residue on the protein receptor. Glycosylates FGF23. This is Polypeptide N-acetylgalactosaminyltransferase 3 (GALNT3) from Taeniopygia guttata (Zebra finch).